Consider the following 365-residue polypeptide: Chorismate synthase (365 aa).

Arg-48 serves as a coordination point for NADP(+). Residues 125–127, Gly-286, 301–305, and Arg-328 each bind FMN; these read RGS and KPTPS.

Belongs to the chorismate synthase family. FMNH2 serves as cofactor.

It catalyses the reaction 5-O-(1-carboxyvinyl)-3-phosphoshikimate = chorismate + phosphate. The protein operates within metabolic intermediate biosynthesis; chorismate biosynthesis; chorismate from D-erythrose 4-phosphate and phosphoenolpyruvate: step 7/7. Its function is as follows. Catalyzes the anti-1,4-elimination of the C-3 phosphate and the C-6 proR hydrogen from 5-enolpyruvylshikimate-3-phosphate (EPSP) to yield chorismate, which is the branch point compound that serves as the starting substrate for the three terminal pathways of aromatic amino acid biosynthesis. This reaction introduces a second double bond into the aromatic ring system. In Methanosphaera stadtmanae (strain ATCC 43021 / DSM 3091 / JCM 11832 / MCB-3), this protein is Chorismate synthase.